Reading from the N-terminus, the 225-residue chain is 2-amino-5-formylamino-6-ribosylaminopyrimidin-4(3H)-one 5'-monophosphate deformylase (225 aa).

Fe cation is bound by residues Glu-28, His-30, Asp-39, and His-107.

It belongs to the creatininase superfamily. FAPy deformylase family. Homodimer. It depends on Fe(2+) as a cofactor. Requires Zn(2+) as cofactor.

It carries out the reaction 2-amino-5-formylamino-6-(5-phospho-D-ribosylamino)pyrimidin-4(3H)-one + H2O = 2,5-diamino-6-(1-D-ribosylamino)pyrimidin-4(3H)-one 5'-phosphate + formate + H(+). It participates in cofactor biosynthesis; coenzyme F420 biosynthesis. Its pathway is cofactor biosynthesis; riboflavin biosynthesis. Its function is as follows. Catalyzes the hydrolysis of the formamide of 2-amino-5-formylamino-6-ribosylamino-4(3H)-pyrimidinone 5'-monophosphate (FAPy) to form 2,5-diamino-6-ribosylamino-4(3H)-pyrimidinone 5'-phosphate (APy). The polypeptide is 2-amino-5-formylamino-6-ribosylaminopyrimidin-4(3H)-one 5'-monophosphate deformylase (Methanocaldococcus fervens (strain DSM 4213 / JCM 15782 / AG86) (Methanococcus fervens)).